Here is a 169-residue protein sequence, read N- to C-terminus: Probable metallophosphoesterase YsnB (169 aa).

Residues Asp8, His10, Asp35, Asn54, His78, His107, and His109 each contribute to the Mn(2+) site.

It belongs to the metallophosphoesterase superfamily. YfcE family. Mn(2+) serves as cofactor.

The polypeptide is Probable metallophosphoesterase YsnB (ysnB) (Bacillus subtilis (strain 168)).